Here is a 460-residue protein sequence, read N- to C-terminus: Kynurenine 3-monooxygenase (460 aa).

FAD contacts are provided by residues Val13, 32 to 34, and Ala53; that span reads DFR. 2 residues coordinate L-kynurenine: Arg83 and Tyr97. Residues Arg109, Leu133, Tyr195, Asp314, and 325–328 contribute to the FAD site; that span reads QGMN. Residues Asn373 and Tyr408 each coordinate L-kynurenine.

This sequence belongs to the aromatic-ring hydroxylase family. KMO subfamily. Requires FAD as cofactor.

Its subcellular location is the mitochondrion outer membrane. It carries out the reaction L-kynurenine + NADPH + O2 + H(+) = 3-hydroxy-L-kynurenine + NADP(+) + H2O. Its pathway is cofactor biosynthesis; NAD(+) biosynthesis; quinolinate from L-kynurenine: step 1/3. In terms of biological role, catalyzes the hydroxylation of L-kynurenine (L-Kyn) to form 3-hydroxy-L-kynurenine (L-3OHKyn). Required for synthesis of quinolinic acid. In Saccharomyces cerevisiae (strain ATCC 204508 / S288c) (Baker's yeast), this protein is Kynurenine 3-monooxygenase.